The primary structure comprises 137 residues: Large-conductance mechanosensitive channel (137 aa).

Transmembrane regions (helical) follow at residues 10–30 (FAMR…AAFG) and 76–96 (GVFI…FVAI).

Belongs to the MscL family. In terms of assembly, homopentamer.

Its subcellular location is the cell inner membrane. Channel that opens in response to stretch forces in the membrane lipid bilayer. May participate in the regulation of osmotic pressure changes within the cell. The chain is Large-conductance mechanosensitive channel from Salmonella choleraesuis (strain SC-B67).